The chain runs to 348 residues: tRNA N6-adenosine threonylcarbamoyltransferase (348 aa).

Fe cation-binding residues include His111 and His115. Substrate-binding positions include 134-138, Asp167, Gly180, Asp184, and Asn280; that span reads LVSGG. Asp308 is a binding site for Fe cation.

The protein belongs to the KAE1 / TsaD family. It depends on Fe(2+) as a cofactor.

It is found in the cytoplasm. The catalysed reaction is L-threonylcarbamoyladenylate + adenosine(37) in tRNA = N(6)-L-threonylcarbamoyladenosine(37) in tRNA + AMP + H(+). Required for the formation of a threonylcarbamoyl group on adenosine at position 37 (t(6)A37) in tRNAs that read codons beginning with adenine. Is involved in the transfer of the threonylcarbamoyl moiety of threonylcarbamoyl-AMP (TC-AMP) to the N6 group of A37, together with TsaE and TsaB. TsaD likely plays a direct catalytic role in this reaction. The chain is tRNA N6-adenosine threonylcarbamoyltransferase from Rippkaea orientalis (strain PCC 8801 / RF-1) (Cyanothece sp. (strain PCC 8801)).